We begin with the raw amino-acid sequence, 209 residues long: Thymidine kinase (209 aa).

ATP-binding positions include 9-16 (AAMNAGKS) and 88-91 (DEAQ). The Proton acceptor role is filled by glutamate 89. Zn(2+)-binding residues include cysteine 146, cysteine 148, cysteine 183, and histidine 186.

It belongs to the thymidine kinase family. As to quaternary structure, homotetramer.

The protein resides in the cytoplasm. The enzyme catalyses thymidine + ATP = dTMP + ADP + H(+). The chain is Thymidine kinase from Legionella pneumophila subsp. pneumophila (strain Philadelphia 1 / ATCC 33152 / DSM 7513).